Here is a 445-residue protein sequence, read N- to C-terminus: Phosphatidate cytidylyltransferase 2 (445 aa).

Basic and acidic residues predominate over residues 1–39 (MTELRQRVAHEPVAPPEDKESESEAKVDGETASDSESRA). Residues 1 to 49 (MTELRQRVAHEPVAPPEDKESESEAKVDGETASDSESRAESAPLPVSAD) are disordered. Position 21 is a phosphoserine (Ser21). Position 31 is a phosphothreonine (Thr31). Phosphoserine is present on residues Ser33, Ser35, and Ser37. Thr51 carries the post-translational modification Phosphothreonine. 6 consecutive transmembrane segments (helical) span residues 79-99 (MIAF…IIVM), 132-152 (FLLC…FFTL), 166-186 (HRFI…LSLV), 213-233 (LVIH…SCVI), 262-282 (GFIG…YVMS), and 340-360 (IALS…ASGF).

The protein belongs to the CDS family. Homodimer. Widely expressed. Expressed in heart, brain and retina, and to a lesser extent in placenta, lung, liver, skeletal muscle, kidney and pancreas.

Its subcellular location is the endoplasmic reticulum membrane. It catalyses the reaction a 1,2-diacyl-sn-glycero-3-phosphate + CTP + H(+) = a CDP-1,2-diacyl-sn-glycerol + diphosphate. The catalysed reaction is 1-octadecanoyl-2-(5Z,8Z,11Z,14Z-eicosatetraenoyl)-sn-glycero-3-phosphate + CTP + H(+) = 1-octadecanoyl-2-(5Z,8Z,11Z,14Z-eicosatetraenoyl)-sn-glycero-3-cytidine-5'-diphosphate + diphosphate. The enzyme catalyses 1-octadecanoyl-2-(9Z,12Z-octadecadienoyl)-sn-glycero-3-phosphate + CTP + H(+) = 1-octadecanoyl-2-(9Z,12Z-octadecadienoyl)-sn-glycero-3-cytidine-5'-diphosphate + diphosphate. It carries out the reaction 1-hexadecanoyl-2-(5Z,8Z,11Z,14Z-eicosatetraenoyl)-sn-glycero-3-phosphate + CTP + H(+) = 1-hexadecanoyl-2-(5Z,8Z,11Z,14Z-eicosatetraenoyl)-sn-glycero-3-cytidine-5'-diphosphate + diphosphate. It catalyses the reaction 1,2-di-(5Z,8Z,11Z,14Z)-eicosatetraenoyl-sn-glycero-3-phosphate + CTP + H(+) = 1,2-di-(5Z,8Z,11Z,14Z-eicosatetraenoyl)-sn-glycero-3-cytidine-5'-diphosphate + diphosphate. The catalysed reaction is 1-octadecanoyl-2-(9Z-octadecenoyl)-sn-glycero-3-phosphate + CTP + H(+) = 1-octadecanoyl-2-(9Z-octadecenoyl)-sn-glycero-3-cytidine-5'-diphosphate + diphosphate. The enzyme catalyses 1-octadecanoyl-2-(4Z,7Z,10Z,13Z,16Z,19Z-docosahexaenoyl)-sn-glycero-3-phosphate + CTP + H(+) = 1-octadecanoyl-2-(4Z,7Z,10Z,13Z,16Z,19Z-docosahexaenoyl)-sn-glycero-3-cytidine-5'-diphosphate + diphosphate. It carries out the reaction 1,2-di-(9Z,12Z-octadecadienoyl)-sn-glycero-3-phosphate + CTP + H(+) = 1,2-di-(9Z,12Z-octadecadienoyl)-sn-glycero-3-cytidine-5'-diphosphate + diphosphate. It catalyses the reaction 1,2-di-(9Z-octadecenoyl)-sn-glycero-3-phosphate + CTP + H(+) = 1,2-di-(9Z-octadecenoyl)-sn-glycero-3-cytidine-5'-diphosphate + diphosphate. It participates in phospholipid metabolism; CDP-diacylglycerol biosynthesis; CDP-diacylglycerol from sn-glycerol 3-phosphate: step 3/3. With respect to regulation, inhibited by its anionic phospholipid end products, with phosphatidylinositol-(4,5)- bisphosphate (PIP2) showing the strongest inhibition. Inhibition is also acyl chain specific, with 1-stearoyl-2-arachidonoyl-snphosphatidylinositol showing the strongest inhibition. Catalyzes the conversion of phosphatidic acid (PA) to CDP-diacylglycerol (CDP-DAG), an essential intermediate in the synthesis of phosphatidylglycerol, cardiolipin and phosphatidylinositol. Exhibits specificity for the nature of the acyl chains at the sn-1 and sn-2 positions in the substrate, PA and the preferred acyl chain composition is 1-stearoyl-2-arachidonoyl-sn-phosphatidic acid. Plays an important role in regulating the growth and maturation of lipid droplets which are storage organelles at the center of lipid and energy homeostasis. The sequence is that of Phosphatidate cytidylyltransferase 2 from Homo sapiens (Human).